Here is a 357-residue protein sequence, read N- to C-terminus: Cholinesterase 1 (357 aa).

The active-site Acyl-ester intermediate is the Ser112. A disulfide bridge links Cys166 with Cys179. Catalysis depends on charge relay system residues Glu244 and His357.

It belongs to the type-B carboxylesterase/lipase family.

The catalysed reaction is an acylcholine + H2O = a carboxylate + choline + H(+). The sequence is that of Cholinesterase 1 (CHE1) from Branchiostoma lanceolatum (Common lancelet).